A 205-amino-acid polypeptide reads, in one-letter code: Thymidylate kinase (205 aa).

An ATP-binding site is contributed by 10–17; that stretch reads GIDGAGKT.

This sequence belongs to the thymidylate kinase family.

It catalyses the reaction dTMP + ATP = dTDP + ADP. In terms of biological role, phosphorylation of dTMP to form dTDP in both de novo and salvage pathways of dTTP synthesis. The polypeptide is Thymidylate kinase (Nitrosospira multiformis (strain ATCC 25196 / NCIMB 11849 / C 71)).